Consider the following 412-residue polypeptide: COP9 signalosome complex subunit 4 (412 aa).

Positions 216–378 (EAAQRYYELS…GILHFEDSNP (163 aa)) constitute a PCI domain.

This sequence belongs to the CSN4 family. As to quaternary structure, component of the CSN complex, probably composed of csn-1, csn-2, csn-3, csn-4, csn-5, csn-6 and csn-7. Within the complex it probably interacts directly with csn-2 and csn-4. In the complex, it probably interacts directly with csn-1, csn-2, csn-3 and csn-6. Interacts with itself.

Its subcellular location is the cytoplasm. The protein resides in the nucleus. Component of the COP9 signalosome complex (CSN), a complex involved in various cellular and developmental processes. The CSN complex is an essential regulator of the ubiquitin (Ubl) conjugation pathway by mediating the deneddylation of the cullin subunits of the SCF-type E3 ligase complexes, leading to decrease the Ubl ligase activity of SCF. The CSN complex plays an essential role in embryogenesis and oogenesis and is required to regulate microtubule stability in the early embryo. Mediates mei-3/katanin targeting for degradation at the meiosis to mitosis transition via deneddylation of cul-3. In Caenorhabditis elegans, this protein is COP9 signalosome complex subunit 4 (csn-4).